We begin with the raw amino-acid sequence, 277 residues long: MSLAQQIEPPQADPGWSAHLQLRFIQREGVTRLGARRHVGPLLVQRPFYPEGAPCHVYVLHPPGGIVAGDRLELDIHLEAGSHALLTMPGASKFYRSIGPTAHLAQRFHLAAGSTLEWLPQDSIFFNGAQASLDSRFSVEPGARLLAWETLCLGRPVMGERFDQGAIDSRLCIDLPGEPGLHERLRIEGGRLDKVGGHPLVATFCATPADQAVLEQVRQQLEALDTPAGATLLGPLLVIRLLDHDNQHLQRNLQRLWHLLRPAVLGLAPCPPRIWAT.

Belongs to the UreD family. UreD, UreF and UreG form a complex that acts as a GTP-hydrolysis-dependent molecular chaperone, activating the urease apoprotein by helping to assemble the nickel containing metallocenter of UreC. The UreE protein probably delivers the nickel.

Its subcellular location is the cytoplasm. In terms of biological role, required for maturation of urease via the functional incorporation of the urease nickel metallocenter. This chain is Urease accessory protein UreD, found in Pseudomonas entomophila (strain L48).